The following is a 407-amino-acid chain: Phosphopentomutase (407 aa).

6 residues coordinate Mn(2+): Asp-11, Asp-305, His-310, Asp-346, His-347, and His-358.

Belongs to the phosphopentomutase family. Requires Mn(2+) as cofactor.

It is found in the cytoplasm. It catalyses the reaction 2-deoxy-alpha-D-ribose 1-phosphate = 2-deoxy-D-ribose 5-phosphate. It carries out the reaction alpha-D-ribose 1-phosphate = D-ribose 5-phosphate. It functions in the pathway carbohydrate degradation; 2-deoxy-D-ribose 1-phosphate degradation; D-glyceraldehyde 3-phosphate and acetaldehyde from 2-deoxy-alpha-D-ribose 1-phosphate: step 1/2. Its function is as follows. Isomerase that catalyzes the conversion of deoxy-ribose 1-phosphate (dRib-1-P) and ribose 1-phosphate (Rib-1-P) to deoxy-ribose 5-phosphate (dRib-5-P) and ribose 5-phosphate (Rib-5-P), respectively. In Legionella pneumophila subsp. pneumophila (strain Philadelphia 1 / ATCC 33152 / DSM 7513), this protein is Phosphopentomutase.